A 428-amino-acid polypeptide reads, in one-letter code: Glutamate-1-semialdehyde 2,1-aminomutase 1 (428 aa).

K268 carries the post-translational modification N6-(pyridoxal phosphate)lysine.

It belongs to the class-III pyridoxal-phosphate-dependent aminotransferase family. HemL subfamily. In terms of assembly, homodimer. Requires pyridoxal 5'-phosphate as cofactor.

It is found in the cytoplasm. It carries out the reaction (S)-4-amino-5-oxopentanoate = 5-aminolevulinate. It functions in the pathway porphyrin-containing compound metabolism; protoporphyrin-IX biosynthesis; 5-aminolevulinate from L-glutamyl-tRNA(Glu): step 2/2. This chain is Glutamate-1-semialdehyde 2,1-aminomutase 1, found in Bacillus cereus (strain G9842).